Here is a 266-residue protein sequence, read N- to C-terminus: Putative [LysW]-aminoadipate/[LysW]-glutamate kinase (266 aa).

Residues Gly36 to Gly37, Arg63, and Asn168 each bind substrate.

It belongs to the acetylglutamate kinase family. LysZ subfamily.

The protein resides in the cytoplasm. The catalysed reaction is [amino-group carrier protein]-C-terminal-N-(1,4-dicarboxybutan-1-yl)-L-glutamine + ATP = [amino-group carrier protein]-C-terminal-N-(1-carboxy-5-phosphooxy-5-oxopentan-1-yl)-L-glutamine + ADP. It catalyses the reaction [amino-group carrier protein]-C-terminal-gamma-(L-glutamyl)-L-glutamate + ATP = [amino-group carrier protein]-C-terminal-gamma-(5-phospho-L-glutamyl)-L-glutamate + ADP. The protein operates within amino-acid biosynthesis; L-lysine biosynthesis via AAA pathway; L-lysine from L-alpha-aminoadipate (Thermus route): step 2/5. It functions in the pathway amino-acid biosynthesis; L-arginine biosynthesis. Involved in both the arginine and lysine biosynthetic pathways. Phosphorylates the LysW-bound precursors glutamate (for arginine biosynthesis), respectively alpha-aminoadipate (for lysine biosynthesis). The sequence is that of Putative [LysW]-aminoadipate/[LysW]-glutamate kinase from Cenarchaeum symbiosum (strain A).